The sequence spans 375 residues: DNA replication and repair protein RecF (375 aa).

Residue 30–37 (GENAQGKT) participates in ATP binding.

This sequence belongs to the RecF family.

It is found in the cytoplasm. In terms of biological role, the RecF protein is involved in DNA metabolism; it is required for DNA replication and normal SOS inducibility. RecF binds preferentially to single-stranded, linear DNA. It also seems to bind ATP. This Bacillus mycoides (strain KBAB4) (Bacillus weihenstephanensis) protein is DNA replication and repair protein RecF.